A 235-amino-acid chain; its full sequence is Probable transcriptional regulatory protein JJD26997_0557 (235 aa).

It belongs to the TACO1 family.

The protein resides in the cytoplasm. This is Probable transcriptional regulatory protein JJD26997_0557 from Campylobacter jejuni subsp. doylei (strain ATCC BAA-1458 / RM4099 / 269.97).